The following is a 595-amino-acid chain: Elongation factor 4 (595 aa).

The 183-residue stretch at 2 to 184 folds into the tr-type G domain; sequence KNIRNFSIIA…QIVERIPTPK (183 aa). Residues 14–19 and 131–134 each bind GTP; these read DHGKST and NKID.

It belongs to the TRAFAC class translation factor GTPase superfamily. Classic translation factor GTPase family. LepA subfamily.

The protein resides in the cell inner membrane. The catalysed reaction is GTP + H2O = GDP + phosphate + H(+). In terms of biological role, required for accurate and efficient protein synthesis under certain stress conditions. May act as a fidelity factor of the translation reaction, by catalyzing a one-codon backward translocation of tRNAs on improperly translocated ribosomes. Back-translocation proceeds from a post-translocation (POST) complex to a pre-translocation (PRE) complex, thus giving elongation factor G a second chance to translocate the tRNAs correctly. Binds to ribosomes in a GTP-dependent manner. This is Elongation factor 4 from Vesicomyosocius okutanii subsp. Calyptogena okutanii (strain HA).